We begin with the raw amino-acid sequence, 79 residues long: Exodeoxyribonuclease 7 small subunit (79 aa).

Belongs to the XseB family. Heterooligomer composed of large and small subunits.

It is found in the cytoplasm. It catalyses the reaction Exonucleolytic cleavage in either 5'- to 3'- or 3'- to 5'-direction to yield nucleoside 5'-phosphates.. Functionally, bidirectionally degrades single-stranded DNA into large acid-insoluble oligonucleotides, which are then degraded further into small acid-soluble oligonucleotides. This chain is Exodeoxyribonuclease 7 small subunit, found in Haemophilus influenzae (strain PittGG).